The following is a 554-amino-acid chain: 3-(3-hydroxy-phenyl)propionate/3-hydroxycinnamic acid hydroxylase (554 aa).

Residues 17–46 and 285–295 each bind FAD; these read QVAI…VVEK and FRIDRVLLAGD.

This sequence belongs to the PheA/TfdB FAD monooxygenase family. FAD is required as a cofactor.

It carries out the reaction 3-(3-hydroxyphenyl)propanoate + NADH + O2 + H(+) = 3-(2,3-dihydroxyphenyl)propanoate + NAD(+) + H2O. It catalyses the reaction (2E)-3-(3-hydroxyphenyl)prop-2-enoate + NADH + O2 + H(+) = (2E)-3-(2,3-dihydroxyphenyl)prop-2-enoate + NAD(+) + H2O. It participates in aromatic compound metabolism; 3-phenylpropanoate degradation. Catalyzes the insertion of one atom of molecular oxygen into position 2 of the phenyl ring of 3-(3-hydroxyphenyl)propionate (3-HPP) and hydroxycinnamic acid (3HCI). The polypeptide is 3-(3-hydroxy-phenyl)propionate/3-hydroxycinnamic acid hydroxylase (Escherichia coli O17:K52:H18 (strain UMN026 / ExPEC)).